The sequence spans 340 residues: Maltose epimerase (340 aa).

Arginine 79 contributes to the substrate binding site. Residue histidine 178 is the Proton donor of the active site. Aspartate 247 contributes to the substrate binding site. The active-site Proton acceptor is glutamate 305.

It belongs to the aldose epimerase family.

The enzyme catalyses alpha-maltose = beta-maltose. Its pathway is carbohydrate metabolism; hexose metabolism. In terms of biological role, catalyzes the interconversion of alpha and beta anomers of maltose. The protein is Maltose epimerase of Levilactobacillus brevis (strain ATCC 367 / BCRC 12310 / CIP 105137 / JCM 1170 / LMG 11437 / NCIMB 947 / NCTC 947) (Lactobacillus brevis).